A 551-amino-acid chain; its full sequence is CTP synthase (551 aa).

Residues 1–273 form an amidoligase domain region; it reads MKNTTNTKRT…DSKILELLNI (273 aa). Serine 21 contacts CTP. Serine 21 is a binding site for UTP. Residues 22–27 and aspartate 79 each bind ATP; that span reads SLGKGL. Aspartate 79 and glutamate 147 together coordinate Mg(2+). Residues 154 to 156, 194 to 199, and lysine 230 contribute to the CTP site; these read DIE and KTKPTQ. UTP-binding positions include 194 to 199 and lysine 230; that span reads KTKPTQ. The 254-residue stretch at 298-551 folds into the Glutamine amidotransferase type-1 domain; it reads TIAITGKYVD…ISAAVANKKG (254 aa). Glycine 360 provides a ligand contact to L-glutamine. The active-site Nucleophile; for glutamine hydrolysis is cysteine 387. L-glutamine-binding positions include 388–391, glutamate 411, and arginine 479; that span reads LGMQ. Residues histidine 524 and glutamate 526 contribute to the active site.

It belongs to the CTP synthase family. As to quaternary structure, homotetramer.

The enzyme catalyses UTP + L-glutamine + ATP + H2O = CTP + L-glutamate + ADP + phosphate + 2 H(+). It carries out the reaction L-glutamine + H2O = L-glutamate + NH4(+). It catalyses the reaction UTP + NH4(+) + ATP = CTP + ADP + phosphate + 2 H(+). The protein operates within pyrimidine metabolism; CTP biosynthesis via de novo pathway; CTP from UDP: step 2/2. Allosterically activated by GTP, when glutamine is the substrate; GTP has no effect on the reaction when ammonia is the substrate. The allosteric effector GTP functions by stabilizing the protein conformation that binds the tetrahedral intermediate(s) formed during glutamine hydrolysis. Inhibited by the product CTP, via allosteric rather than competitive inhibition. Functionally, catalyzes the ATP-dependent amination of UTP to CTP with either L-glutamine or ammonia as the source of nitrogen. Regulates intracellular CTP levels through interactions with the four ribonucleotide triphosphates. The chain is CTP synthase from Desulfotalea psychrophila (strain LSv54 / DSM 12343).